The chain runs to 229 residues: MIFLDYDGTLVPIIMNPEESYADAGLLSLISDLKERFDTYIVTGRSPEEISRFLPLDINMICYHGACSKINGQIVYNNGSDRFLGVFDRIYEDTRSWVSDFPGLRIYRKNLAVLYHLGLMGADMKPKLRSRIEEIARIFGVETYYGKMIIELRVPGVNKGSAIRSVRGERPAIIAGDDATDEAAFEANDDALTIKVGEGETHAKFHVADYIEMRKILKFIEMLGVQKKQ.

Residue aspartate 5 is the Nucleophile of the active site. Mg(2+) contacts are provided by aspartate 5, aspartate 7, and aspartate 177. Position 5 to 7 (5 to 7 (DYD)) interacts with substrate.

This sequence belongs to the trehalose phosphatase family. Mg(2+) serves as cofactor.

It carries out the reaction alpha,alpha-trehalose 6-phosphate + H2O = alpha,alpha-trehalose + phosphate. Its pathway is glycan biosynthesis; trehalose biosynthesis. Functionally, removes the phosphate from trehalose 6-phosphate (Tre6P) to produce free trehalose. Also catalyzes the dephosphorylation of para-nitrophenyl phosphate (pNPP), but with lesser efficiency (in vitro). The polypeptide is Trehalose-6-phosphate phosphatase-related protein (Thermoplasma acidophilum (strain ATCC 25905 / DSM 1728 / JCM 9062 / NBRC 15155 / AMRC-C165)).